The sequence spans 65 residues: MAKVSSAYLKFALVMILLLSVISAVMSAGCIKNGGRCNASAGPPYCCSSYCFQIAGQSYGVCKNR.

The N-terminal stretch at 1–27 (MAKVSSAYLKFALVMILLLSVISAVMS) is a signal peptide. 3 disulfide bridges follow: Cys-30–Cys-47, Cys-37–Cys-51, and Cys-46–Cys-62.

The protein belongs to the AMP family. As to expression, seed specific.

The protein localises to the secreted. Functionally, possesses antifungal activity. The chain is Antimicrobial peptide 1 from Phytolacca americana (American pokeweed).